A 226-amino-acid polypeptide reads, in one-letter code: ATP synthase F(0) complex subunit a (226 aa).

6 helical membrane passes run Phe6–Phe26, Trp68–Leu88, Gln97–Phe117, Ile138–Val158, Ile164–Ile184, and Ala189–Ile209.

The protein belongs to the ATPase A chain family. In terms of assembly, component of the ATP synthase complex composed at least of ATP5F1A/subunit alpha, ATP5F1B/subunit beta, ATP5MC1/subunit c (homooctomer), MT-ATP6/subunit a, MT-ATP8/subunit 8, ATP5ME/subunit e, ATP5MF/subunit f, ATP5MG/subunit g, ATP5MK/subunit k, ATP5MJ/subunit j, ATP5F1C/subunit gamma, ATP5F1D/subunit delta, ATP5F1E/subunit epsilon, ATP5PF/subunit F6, ATP5PB/subunit b, ATP5PD/subunit d, ATP5PO/subunit OSCP. ATP synthase complex consists of a soluble F(1) head domain (subunits alpha(3) and beta(3)) - the catalytic core - and a membrane F(0) domain - the membrane proton channel (subunits c, a, 8, e, f, g, k and j). These two domains are linked by a central stalk (subunits gamma, delta, and epsilon) rotating inside the F1 region and a stationary peripheral stalk (subunits F6, b, d, and OSCP). Interacts with DNAJC30; interaction is direct.

Its subcellular location is the mitochondrion inner membrane. The enzyme catalyses H(+)(in) = H(+)(out). Subunit a, of the mitochondrial membrane ATP synthase complex (F(1)F(0) ATP synthase or Complex V) that produces ATP from ADP in the presence of a proton gradient across the membrane which is generated by electron transport complexes of the respiratory chain. ATP synthase complex consist of a soluble F(1) head domain - the catalytic core - and a membrane F(1) domain - the membrane proton channel. These two domains are linked by a central stalk rotating inside the F(1) region and a stationary peripheral stalk. During catalysis, ATP synthesis in the catalytic domain of F(1) is coupled via a rotary mechanism of the central stalk subunits to proton translocation. With the subunit c (ATP5MC1), forms the proton-conducting channel in the F(0) domain, that contains two crucial half-channels (inlet and outlet) that facilitate proton movement from the mitochondrial intermembrane space (IMS) into the matrix. Protons are taken up via the inlet half-channel and released through the outlet half-channel, following a Grotthuss mechanism. The protein is ATP synthase F(0) complex subunit a of Ictidomys tridecemlineatus (Thirteen-lined ground squirrel).